The primary structure comprises 214 residues: GTP-binding nuclear protein GSP1 (214 aa).

In terms of domain architecture, Small GTPase Ran-type spans 4 to 172 (RELTYKICLI…LHLARIFTGR (169 aa)). 17–22 (GVGKTT) is a binding site for GTP. The tract at residues 34-42 (KNYNATVGA) is switch-I. Residues Gly-66, 121–124 (NKID), and 151–153 (SAK) each bind GTP. A switch-II region spans residues 66–82 (GQEKKAVLKDVYYIGAS).

It belongs to the small GTPase superfamily. Ran family. Found in a nuclear export complex with RanGTP, exportin and pre-miRNA.

The protein localises to the nucleus. In terms of biological role, GTP-binding protein involved in nucleocytoplasmic transport. Required for the import of protein into the nucleus and also for RNA export. The polypeptide is GTP-binding nuclear protein GSP1 (GSP1) (Encephalitozoon cuniculi (strain GB-M1) (Microsporidian parasite)).